A 379-amino-acid chain; its full sequence is Dihydroflavonol 4-reductase (379 aa).

Residues Lys56 and Tyr175 each contribute to the NADP(+) site.

It belongs to the NAD(P)-dependent epimerase/dehydratase family. Dihydroflavonol-4-reductase subfamily. Expressed in both leaf and hypocotyl tissues.

The catalysed reaction is a (2R,3S,4S)-leucoanthocyanidin + NADP(+) = a (2R,3R)-dihydroflavonol + NADPH + H(+). The enzyme catalyses (2S)-flavan-4-ol + NADP(+) = (2S)-flavanone + NADPH + H(+). The protein operates within pigment biosynthesis; anthocyanin biosynthesis. In terms of biological role, bifunctional enzyme involved in flavonoid metabolism. The protein is Dihydroflavonol 4-reductase of Solanum lycopersicum (Tomato).